Reading from the N-terminus, the 221-residue chain is Adenylate kinase (221 aa).

10–15 provides a ligand contact to ATP; sequence GAGKGT. The interval 30 to 59 is NMP; it reads STGDMLRAAVKAGTPLGLEAKRFMDAGELV. AMP-binding positions include Thr-31, Arg-36, 57–59, 85–88, and Gln-92; these read ELV and GFPR. Residues 122–159 are LID; it reads GRRSHAASGRTYHVKFNPPKVEGVDDMTGEPLIQRDDD. ATP is bound by residues Arg-123 and 132-133; that span reads TY. 2 residues coordinate AMP: Arg-156 and Arg-167. Gly-207 is an ATP binding site.

Belongs to the adenylate kinase family. Monomer.

It localises to the cytoplasm. It catalyses the reaction AMP + ATP = 2 ADP. It functions in the pathway purine metabolism; AMP biosynthesis via salvage pathway; AMP from ADP: step 1/1. Its function is as follows. Catalyzes the reversible transfer of the terminal phosphate group between ATP and AMP. Plays an important role in cellular energy homeostasis and in adenine nucleotide metabolism. The protein is Adenylate kinase of Paraburkholderia phytofirmans (strain DSM 17436 / LMG 22146 / PsJN) (Burkholderia phytofirmans).